Here is a 445-residue protein sequence, read N- to C-terminus: Ribosomal protein uS12 methylthiotransferase RimO (445 aa).

Residues 10-120 enclose the MTTase N-terminal domain; it reads PKVGFVSLGC…VVNAVHEVVP (111 aa). [4Fe-4S] cluster is bound by residues C19, C55, C84, C153, C157, and C160. In terms of domain architecture, Radical SAM core spans 139–378; the sequence is LTPRHYAYLK…AHQQAISSAR (240 aa). The TRAM domain occupies 380 to 445; that stretch reads QLRIGREIEV…DEYDLWAEQI (66 aa).

The protein belongs to the methylthiotransferase family. RimO subfamily. The cofactor is [4Fe-4S] cluster.

It localises to the cytoplasm. It catalyses the reaction L-aspartate(89)-[ribosomal protein uS12]-hydrogen + (sulfur carrier)-SH + AH2 + 2 S-adenosyl-L-methionine = 3-methylsulfanyl-L-aspartate(89)-[ribosomal protein uS12]-hydrogen + (sulfur carrier)-H + 5'-deoxyadenosine + L-methionine + A + S-adenosyl-L-homocysteine + 2 H(+). Catalyzes the methylthiolation of an aspartic acid residue of ribosomal protein uS12. In Pseudomonas fluorescens (strain Pf0-1), this protein is Ribosomal protein uS12 methylthiotransferase RimO.